Consider the following 255-residue polypeptide: tRNA (guanine-N(7)-)-methyltransferase (255 aa).

The segment at 1–29 is disordered; it reads MSDSDASRPSAIASDGPDAAGKHASGAPW. S-adenosyl-L-methionine is bound by residues Glu-86, Glu-111, Asp-138, and Asp-160. Residue Asp-160 is part of the active site. Substrate-binding positions include Lys-164, Asp-196, and 233-236; that span reads TRYE.

It belongs to the class I-like SAM-binding methyltransferase superfamily. TrmB family.

It carries out the reaction guanosine(46) in tRNA + S-adenosyl-L-methionine = N(7)-methylguanosine(46) in tRNA + S-adenosyl-L-homocysteine. Its pathway is tRNA modification; N(7)-methylguanine-tRNA biosynthesis. In terms of biological role, catalyzes the formation of N(7)-methylguanine at position 46 (m7G46) in tRNA. The polypeptide is tRNA (guanine-N(7)-)-methyltransferase (Ruegeria sp. (strain TM1040) (Silicibacter sp.)).